Here is a 339-residue protein sequence, read N- to C-terminus: D-erythrose-4-phosphate dehydrogenase (339 aa).

Residue 12–13 (RI) coordinates NAD(+). Residues 154-156 (SCT), arginine 200, 213-214 (TK), and arginine 236 each bind substrate. The Nucleophile role is filled by cysteine 155. Residue asparagine 318 participates in NAD(+) binding.

The protein belongs to the glyceraldehyde-3-phosphate dehydrogenase family. Epd subfamily. As to quaternary structure, homotetramer.

The protein localises to the cytoplasm. The catalysed reaction is D-erythrose 4-phosphate + NAD(+) + H2O = 4-phospho-D-erythronate + NADH + 2 H(+). It participates in cofactor biosynthesis; pyridoxine 5'-phosphate biosynthesis; pyridoxine 5'-phosphate from D-erythrose 4-phosphate: step 1/5. Catalyzes the NAD-dependent conversion of D-erythrose 4-phosphate to 4-phosphoerythronate. The protein is D-erythrose-4-phosphate dehydrogenase of Proteus mirabilis (strain HI4320).